The chain runs to 238 residues: Survival of motor neuron-related-splicing factor 30 (238 aa).

The 61-residue stretch at 72 to 132 (SWKVGDKCMA…KPVEEGRKAK (61 aa)) folds into the Tudor domain. The Nuclear localization signal signature appears at 142 to 160 (KKEMIAQQREYKKKKALKK). At Ser201 the chain carries Phosphoserine. Lys219 bears the N6-acetyllysine mark.

It belongs to the SMN family. Associates with spliceosomes. Associates with U4/U5/U6 tri-snRNP and with U2 snRNP.

Its subcellular location is the nucleus speckle. It is found in the nucleus. The protein localises to the cajal body. In terms of biological role, involved in spliceosome assembly. This chain is Survival of motor neuron-related-splicing factor 30 (Smndc1), found in Rattus norvegicus (Rat).